Reading from the N-terminus, the 111-residue chain is MSAALTTLLLFVATAVAELVGCYLPYLWLRKGGSVWLLLPAALSLAVFVWLLTLHPAASGRVYAAYGGVYIATALLWLWWVDRVTPTRWDLLGAGCCLLGMAIIMFSPRSG.

4 consecutive transmembrane segments (helical) span residues 8-28 (LLLF…PYLW), 34-54 (SVWL…LLTL), 62-82 (VYAA…WWVD), and 91-111 (LLGA…PRSG).

This sequence belongs to the UPF0060 family.

The protein resides in the cell inner membrane. This is UPF0060 membrane protein xcc-b100_1273 from Xanthomonas campestris pv. campestris (strain B100).